The primary structure comprises 96 residues: Co-chaperonin GroES (96 aa).

It belongs to the GroES chaperonin family. Heptamer of 7 subunits arranged in a ring. Interacts with the chaperonin GroEL.

Its subcellular location is the cytoplasm. Together with the chaperonin GroEL, plays an essential role in assisting protein folding. The GroEL-GroES system forms a nano-cage that allows encapsulation of the non-native substrate proteins and provides a physical environment optimized to promote and accelerate protein folding. GroES binds to the apical surface of the GroEL ring, thereby capping the opening of the GroEL channel. The polypeptide is Co-chaperonin GroES (Syntrophomonas wolfei subsp. wolfei (strain DSM 2245B / Goettingen)).